Here is a 247-residue protein sequence, read N- to C-terminus: Segregation and condensation protein A (247 aa).

Belongs to the ScpA family. As to quaternary structure, component of a cohesin-like complex composed of ScpA, ScpB and the Smc homodimer, in which ScpA and ScpB bind to the head domain of Smc. The presence of the three proteins is required for the association of the complex with DNA.

It is found in the cytoplasm. Functionally, participates in chromosomal partition during cell division. May act via the formation of a condensin-like complex containing Smc and ScpB that pull DNA away from mid-cell into both cell halves. In Lactobacillus johnsonii (strain CNCM I-12250 / La1 / NCC 533), this protein is Segregation and condensation protein A.